Consider the following 115-residue polypeptide: Phosphoribosyl-AMP cyclohydrolase (115 aa).

A Mg(2+)-binding site is contributed by Asp80. Cys81 lines the Zn(2+) pocket. Mg(2+)-binding residues include Asp82 and Asp84. The Zn(2+) site is built by Cys97 and Cys104.

It belongs to the PRA-CH family. In terms of assembly, homodimer. It depends on Mg(2+) as a cofactor. Requires Zn(2+) as cofactor.

Its subcellular location is the cytoplasm. It carries out the reaction 1-(5-phospho-beta-D-ribosyl)-5'-AMP + H2O = 1-(5-phospho-beta-D-ribosyl)-5-[(5-phospho-beta-D-ribosylamino)methylideneamino]imidazole-4-carboxamide. The protein operates within amino-acid biosynthesis; L-histidine biosynthesis; L-histidine from 5-phospho-alpha-D-ribose 1-diphosphate: step 3/9. Catalyzes the hydrolysis of the adenine ring of phosphoribosyl-AMP. This chain is Phosphoribosyl-AMP cyclohydrolase, found in Mycolicibacterium paratuberculosis (strain ATCC BAA-968 / K-10) (Mycobacterium paratuberculosis).